Reading from the N-terminus, the 187-residue chain is Protein GrpE (187 aa).

Residues 1–23 form a disordered region; it reads MADEQNLDAQAQDQAAEAGAGEE. Over residues 7–23 the composition is skewed to low complexity; sequence LDAQAQDQAAEAGAGEE.

The protein belongs to the GrpE family. In terms of assembly, homodimer.

It is found in the cytoplasm. Its function is as follows. Participates actively in the response to hyperosmotic and heat shock by preventing the aggregation of stress-denatured proteins, in association with DnaK and GrpE. It is the nucleotide exchange factor for DnaK and may function as a thermosensor. Unfolded proteins bind initially to DnaJ; upon interaction with the DnaJ-bound protein, DnaK hydrolyzes its bound ATP, resulting in the formation of a stable complex. GrpE releases ADP from DnaK; ATP binding to DnaK triggers the release of the substrate protein, thus completing the reaction cycle. Several rounds of ATP-dependent interactions between DnaJ, DnaK and GrpE are required for fully efficient folding. The sequence is that of Protein GrpE from Pseudomonas savastanoi pv. phaseolicola (strain 1448A / Race 6) (Pseudomonas syringae pv. phaseolicola (strain 1448A / Race 6)).